The primary structure comprises 206 residues: Flavin prenyltransferase UbiX (206 aa).

FMN-binding positions include 14–16 (GAS), Thr40, 101–104 (SMGT), and Arg136. Dimethylallyl phosphate is bound by residues Tyr166 and Lys182.

It belongs to the UbiX/PAD1 family.

It carries out the reaction dimethylallyl phosphate + FMNH2 = prenylated FMNH2 + phosphate. In terms of biological role, flavin prenyltransferase that catalyzes the synthesis of the prenylated FMN cofactor (prenyl-FMN) for 4-hydroxy-3-polyprenylbenzoic acid decarboxylase UbiD. The prenyltransferase is metal-independent and links a dimethylallyl moiety from dimethylallyl monophosphate (DMAP) to the flavin N5 and C6 atoms of FMN. The protein is Flavin prenyltransferase UbiX of Halalkalibacterium halodurans (strain ATCC BAA-125 / DSM 18197 / FERM 7344 / JCM 9153 / C-125) (Bacillus halodurans).